A 345-amino-acid chain; its full sequence is Succinylglutamate desuccinylase (345 aa).

Residues His63, Glu66, and His160 each contribute to the Zn(2+) site. Glu224 is an active-site residue.

The protein belongs to the AspA/AstE family. Succinylglutamate desuccinylase subfamily. Zn(2+) is required as a cofactor.

The catalysed reaction is N-succinyl-L-glutamate + H2O = L-glutamate + succinate. The protein operates within amino-acid degradation; L-arginine degradation via AST pathway; L-glutamate and succinate from L-arginine: step 5/5. In terms of biological role, transforms N(2)-succinylglutamate into succinate and glutamate. The polypeptide is Succinylglutamate desuccinylase (Shewanella woodyi (strain ATCC 51908 / MS32)).